A 1052-amino-acid polypeptide reads, in one-letter code: Fibroblast growth factor receptor homolog 2 (1052 aa).

The first 19 residues, 1-19, serve as a signal peptide directing secretion; sequence MAKVPITLVMIIAIVSAAA. Residues 20–600 lie on the Extracellular side of the membrane; that stretch reads DLGCDYGHHR…EIYALLHAHP (581 aa). Ig-like C2-type domains are found at residues 23-117, 124-230, and 240-340; these read CDYG…IASF, PALP…PTQL, and PMLK…RTVA. Cys-30 and Cys-90 form a disulfide bridge. Asn-99, Asn-137, Asn-175, Asn-181, Asn-249, and Asn-257 each carry an N-linked (GlcNAc...) asparagine glycan. Cys-164 and Cys-217 form a disulfide bridge. A disulfide bridge connects residues Cys-262 and Cys-329. A compositionally biased stretch (low complexity) spans 358–372; sequence TTTTTVASPIPTAST. Residues 358 to 393 are disordered; sequence TTTTTVASPIPTASTGEDNDDDVENPAAEASGGVGP. Ig-like C2-type domains follow at residues 393-478 and 487-585; these read PPVF…FSVQ and PIIV…RVVS. Residues Cys-416 and Cys-462 are joined by a disulfide bond. Asn-423, Asn-444, Asn-494, Asn-500, Asn-526, Asn-541, Asn-546, Asn-555, and Asn-576 each carry an N-linked (GlcNAc...) asparagine glycan. Residues Cys-507 and Cys-566 are joined by a disulfide bond. The chain crosses the membrane as a helical span at residues 601–626; the sequence is LGFTLAAITIVALFLLGSAFITFMLR. The Cytoplasmic portion of the chain corresponds to 627-1052; it reads RLRREKLLKL…LRYQYTYKFN (426 aa). Residues 712-1000 enclose the Protein kinase domain; it reads LSLGSILGEG…ELVESFDGIL (289 aa). ATP is bound by residues 718-726 and Lys-748; that span reads LGEGAFGRV. Asp-864 acts as the Proton acceptor in catalysis. At Tyr-895 the chain carries Phosphotyrosine; by autocatalysis. Positions 1017-1038 are disordered; the sequence is PMLETPPSSGDEDDGSDTETFR.

It belongs to the protein kinase superfamily. Tyr protein kinase family. Fibroblast growth factor receptor subfamily. During embryogenesis, expression is seen in mesoderm, endodermal precursor cells, CNS midline cells and trachea and salivary duct ectodermal cells.

The protein localises to the membrane. It carries out the reaction L-tyrosyl-[protein] + ATP = O-phospho-L-tyrosyl-[protein] + ADP + H(+). May be required for patterning of muscle precursor cells: generation of mesodermal and endodermal layers, invaginations of various types of cells, and CNS formation. Essential for the ability of the migrating tracheal and midline cells to recognize external guiding cues. The sequence is that of Fibroblast growth factor receptor homolog 2 (btl) from Drosophila melanogaster (Fruit fly).